A 369-amino-acid polypeptide reads, in one-letter code: Beta-1,3-galactosyltransferase 9 (369 aa).

Over 1-12 (MQVTFCRLRTHQ) the chain is Cytoplasmic. Residues 13–33 (WCFILFNVILFHALLFGTDFV) traverse the membrane as a helical; Signal-anchor for type II membrane protein segment. Residues 34-369 (EEYFLHSLPY…IKNNLMYFAD (336 aa)) are Lumenal-facing. N-linked (GlcNAc...) asparagine glycosylation is found at Asn66, Asn96, and Asn109.

The protein belongs to the glycosyltransferase 31 family.

The protein resides in the golgi apparatus membrane. Putative glycosyltransferase that could catalyze the transfer of galactose residues from UDP-alpha-D-galactose. The protein is Beta-1,3-galactosyltransferase 9 of Homo sapiens (Human).